The following is a 329-amino-acid chain: Acetyl-coenzyme A carboxylase carboxyl transferase subunit alpha (329 aa).

One can recognise a CoA carboxyltransferase C-terminal domain in the interval 40–294 (QLESLASRRR…RAALERHLGE (255 aa)).

Belongs to the AccA family. As to quaternary structure, acetyl-CoA carboxylase is a heterohexamer composed of biotin carboxyl carrier protein (AccB), biotin carboxylase (AccC) and two subunits each of ACCase subunit alpha (AccA) and ACCase subunit beta (AccD).

The protein localises to the cytoplasm. It catalyses the reaction N(6)-carboxybiotinyl-L-lysyl-[protein] + acetyl-CoA = N(6)-biotinyl-L-lysyl-[protein] + malonyl-CoA. It functions in the pathway lipid metabolism; malonyl-CoA biosynthesis; malonyl-CoA from acetyl-CoA: step 1/1. Its function is as follows. Component of the acetyl coenzyme A carboxylase (ACC) complex. First, biotin carboxylase catalyzes the carboxylation of biotin on its carrier protein (BCCP) and then the CO(2) group is transferred by the carboxyltransferase to acetyl-CoA to form malonyl-CoA. This is Acetyl-coenzyme A carboxylase carboxyl transferase subunit alpha from Synechococcus sp. (strain CC9902).